The chain runs to 94 residues: Co-chaperonin GroES (94 aa).

It belongs to the GroES chaperonin family. As to quaternary structure, heptamer of 7 subunits arranged in a ring. Interacts with the chaperonin GroEL.

It localises to the cytoplasm. Together with the chaperonin GroEL, plays an essential role in assisting protein folding. The GroEL-GroES system forms a nano-cage that allows encapsulation of the non-native substrate proteins and provides a physical environment optimized to promote and accelerate protein folding. GroES binds to the apical surface of the GroEL ring, thereby capping the opening of the GroEL channel. The polypeptide is Co-chaperonin GroES (Staphylococcus epidermidis).